Reading from the N-terminus, the 352-residue chain is N-acetyl-gamma-glutamyl-phosphate reductase (352 aa).

Residue C151 is part of the active site.

Belongs to the NAGSA dehydrogenase family. Type 1 subfamily.

It is found in the cytoplasm. The enzyme catalyses N-acetyl-L-glutamate 5-semialdehyde + phosphate + NADP(+) = N-acetyl-L-glutamyl 5-phosphate + NADPH + H(+). Its pathway is amino-acid biosynthesis; L-arginine biosynthesis; N(2)-acetyl-L-ornithine from L-glutamate: step 3/4. Catalyzes the NADPH-dependent reduction of N-acetyl-5-glutamyl phosphate to yield N-acetyl-L-glutamate 5-semialdehyde. This chain is N-acetyl-gamma-glutamyl-phosphate reductase, found in Renibacterium salmoninarum (strain ATCC 33209 / DSM 20767 / JCM 11484 / NBRC 15589 / NCIMB 2235).